A 167-amino-acid polypeptide reads, in one-letter code: Calcium-binding protein CML19 (167 aa).

EF-hand domains follow at residues 23 to 58 (QKRR…LGFE), 59 to 94 (MNNQ…KFGE), 96 to 131 (DSID…LGEN), and 132 to 167 (FTDN…TSYG). 19 residues coordinate Ca(2+): D36, D38, S40, S42, E47, D72, N74, S76, E83, D109, D111, N113, K115, D120, D145, D147, D149, E151, and E156.

Belongs to the centrin family. In terms of assembly, interacts with RAD4. Calcium is required for this interaction. Interacts with SAC3B. Expressed in leaves, roots, and at lower level in stems. Barely detectable in flower buds and flowers.

It localises to the cytoplasm. The protein localises to the nucleus. Functionally, potential calcium sensor that binds calcium in vitro. Modulates homologous recombination and nucleotide excision repair (NER). Involved in the early response to UV irradiation. This Arabidopsis thaliana (Mouse-ear cress) protein is Calcium-binding protein CML19.